Here is a 327-residue protein sequence, read N- to C-terminus: Zinc transport protein ZntB (327 aa).

Over 1-271 the chain is Cytoplasmic; it reads MDVVEGKALQ…AMNRRTYTMS (271 aa). Residues 272–292 traverse the membrane as a helical segment; that stretch reads LLAMVFLPTTFLTGLFGVNLG. The Periplasmic portion of the chain corresponds to 293–300; it reads GIPGNTDA. Residues 301–321 form a helical membrane-spanning segment; sequence FGFTIFCMMLVVLVLSVAWWL. Over 322–327 the chain is Cytoplasmic; sequence KRSKWL.

The protein belongs to the CorA metal ion transporter (MIT) (TC 1.A.35) family.

It is found in the cell inner membrane. It catalyses the reaction Zn(2+)(out) + H(+)(out) = Zn(2+)(in) + H(+)(in). Its function is as follows. Zinc transporter. Acts as a Zn(2+):proton symporter, which likely mediates zinc ion uptake. The chain is Zinc transport protein ZntB from Yersinia pseudotuberculosis serotype O:1b (strain IP 31758).